The sequence spans 258 residues: 5'-nucleotidase SurE (258 aa).

A divalent metal cation-binding residues include D8, D9, S40, and N92.

Belongs to the SurE nucleotidase family. A divalent metal cation is required as a cofactor.

It is found in the cytoplasm. It catalyses the reaction a ribonucleoside 5'-phosphate + H2O = a ribonucleoside + phosphate. Nucleotidase that shows phosphatase activity on nucleoside 5'-monophosphates. The polypeptide is 5'-nucleotidase SurE (Brucella anthropi (strain ATCC 49188 / DSM 6882 / CCUG 24695 / JCM 21032 / LMG 3331 / NBRC 15819 / NCTC 12168 / Alc 37) (Ochrobactrum anthropi)).